The sequence spans 203 residues: Recombination protein RecR (203 aa).

The C4-type zinc finger occupies 56-71 (CSVCGNVSDEERCRIC). The Toprim domain occupies 79–179 (SLVCVVEEPK…TVTRIASGLP (101 aa)).

The protein belongs to the RecR family.

In terms of biological role, may play a role in DNA repair. It seems to be involved in an RecBC-independent recombinational process of DNA repair. It may act with RecF and RecO. The polypeptide is Recombination protein RecR (Mycolicibacterium smegmatis (strain ATCC 700084 / mc(2)155) (Mycobacterium smegmatis)).